A 366-amino-acid chain; its full sequence is Aminomethyltransferase (366 aa).

It belongs to the GcvT family. As to quaternary structure, the glycine cleavage system is composed of four proteins: P, T, L and H.

The enzyme catalyses N(6)-[(R)-S(8)-aminomethyldihydrolipoyl]-L-lysyl-[protein] + (6S)-5,6,7,8-tetrahydrofolate = N(6)-[(R)-dihydrolipoyl]-L-lysyl-[protein] + (6R)-5,10-methylene-5,6,7,8-tetrahydrofolate + NH4(+). In terms of biological role, the glycine cleavage system catalyzes the degradation of glycine. The chain is Aminomethyltransferase from Bacillus cereus (strain ZK / E33L).